A 269-amino-acid chain; its full sequence is Tryptophan synthase alpha chain (269 aa).

Catalysis depends on proton acceptor residues Glu-49 and Asp-60.

Belongs to the TrpA family. In terms of assembly, tetramer of two alpha and two beta chains.

It catalyses the reaction (1S,2R)-1-C-(indol-3-yl)glycerol 3-phosphate + L-serine = D-glyceraldehyde 3-phosphate + L-tryptophan + H2O. It functions in the pathway amino-acid biosynthesis; L-tryptophan biosynthesis; L-tryptophan from chorismate: step 5/5. Functionally, the alpha subunit is responsible for the aldol cleavage of indoleglycerol phosphate to indole and glyceraldehyde 3-phosphate. The chain is Tryptophan synthase alpha chain from Delftia acidovorans (strain DSM 14801 / SPH-1).